A 91-amino-acid chain; its full sequence is Protein SPATA45 homolog (91 aa).

The tract at residues 42 to 91 (RADRKHDPNGFNSSVFKGASNQHQESSLDFATAEPEFHRERRHFPEKSEY) is disordered. Polar residues predominate over residues 51–70 (GFNSSVFKGASNQHQESSLD). Over residues 76–91 (PEFHRERRHFPEKSEY) the composition is skewed to basic and acidic residues.

Belongs to the SPATA45 family.

This chain is Protein SPATA45 homolog, found in Nematostella vectensis (Starlet sea anemone).